The sequence spans 793 residues: Phosphoribosylformylglycinamidine synthase subunit PurL (793 aa).

Residue histidine 53 is part of the active site. 2 residues coordinate ATP: tyrosine 56 and lysine 95. Glutamate 97 contacts Mg(2+). Residues 98–101 (SHNH) and arginine 120 contribute to the substrate site. The active-site Proton acceptor is the histidine 99. Aspartate 121 lines the Mg(2+) pocket. Glutamine 244 contributes to the substrate binding site. Residue aspartate 272 coordinates Mg(2+). 316–318 (ESQ) lines the substrate pocket. 2 residues coordinate ATP: aspartate 523 and glycine 560. Residue asparagine 561 participates in Mg(2+) binding. Serine 563 contacts substrate.

The protein belongs to the FGAMS family. Monomer. Part of the FGAM synthase complex composed of 1 PurL, 1 PurQ and 2 PurS subunits.

It is found in the cytoplasm. The enzyme catalyses N(2)-formyl-N(1)-(5-phospho-beta-D-ribosyl)glycinamide + L-glutamine + ATP + H2O = 2-formamido-N(1)-(5-O-phospho-beta-D-ribosyl)acetamidine + L-glutamate + ADP + phosphate + H(+). It functions in the pathway purine metabolism; IMP biosynthesis via de novo pathway; 5-amino-1-(5-phospho-D-ribosyl)imidazole from N(2)-formyl-N(1)-(5-phospho-D-ribosyl)glycinamide: step 1/2. Part of the phosphoribosylformylglycinamidine synthase complex involved in the purines biosynthetic pathway. Catalyzes the ATP-dependent conversion of formylglycinamide ribonucleotide (FGAR) and glutamine to yield formylglycinamidine ribonucleotide (FGAM) and glutamate. The FGAM synthase complex is composed of three subunits. PurQ produces an ammonia molecule by converting glutamine to glutamate. PurL transfers the ammonia molecule to FGAR to form FGAM in an ATP-dependent manner. PurS interacts with PurQ and PurL and is thought to assist in the transfer of the ammonia molecule from PurQ to PurL. The chain is Phosphoribosylformylglycinamidine synthase subunit PurL from Prochlorococcus marinus (strain SARG / CCMP1375 / SS120).